The chain runs to 177 residues: Alkyl hydroperoxide reductase AhpD (177 aa).

Cys131 functions as the Proton donor in the catalytic mechanism. A disulfide bond links Cys131 and Cys134. Catalysis depends on Cys134, which acts as the Cysteine sulfenic acid (-SOH) intermediate.

This sequence belongs to the AhpD family. As to quaternary structure, homotrimer.

It catalyses the reaction N(6)-[(R)-dihydrolipoyl]-L-lysyl-[lipoyl-carrier protein] + a hydroperoxide = N(6)-[(R)-lipoyl]-L-lysyl-[lipoyl-carrier protein] + an alcohol + H2O. Antioxidant protein with alkyl hydroperoxidase activity. Required for the reduction of the AhpC active site cysteine residues and for the regeneration of the AhpC enzyme activity. The polypeptide is Alkyl hydroperoxide reductase AhpD (Streptomyces griseus subsp. griseus (strain JCM 4626 / CBS 651.72 / NBRC 13350 / KCC S-0626 / ISP 5235)).